The chain runs to 336 residues: Meiotically up-regulated gene 33 protein (336 aa).

Residues 232–336 (ISEDDGLKRG…KPSRFSWGRS (105 aa)) are disordered. Polar residues predominate over residues 250–262 (TFSNDSRSLSSYA).

The protein resides in the cytoplasm. Functionally, has a role in meiosis. This is Meiotically up-regulated gene 33 protein (mug33) from Schizosaccharomyces pombe (strain 972 / ATCC 24843) (Fission yeast).